A 197-amino-acid polypeptide reads, in one-letter code: Large ribosomal subunit protein mL58 (197 aa).

The N-terminal 20 residues, 1–20 (MLFTIKPSFLKPVGFIQTRN), are a transit peptide targeting the mitochondrion.

The protein belongs to the mitochondrion-specific ribosomal protein mL58 family. Component of the mitochondrial large ribosomal subunit (mt-LSU). Mature yeast 74S mitochondrial ribosomes consist of a small (37S) and a large (54S) subunit. The 37S small subunit contains a 15S ribosomal RNA (15S mt-rRNA) and at least 32 different proteins. The 54S large subunit contains a 21S rRNA (21S mt-rRNA) and at least 45 different proteins.

Its subcellular location is the mitochondrion. Its function is as follows. Component of the mitochondrial ribosome (mitoribosome), a dedicated translation machinery responsible for the synthesis of mitochondrial genome-encoded proteins, including at least some of the essential transmembrane subunits of the mitochondrial respiratory chain. The mitoribosomes are attached to the mitochondrial inner membrane and translation products are cotranslationally integrated into the membrane. The chain is Large ribosomal subunit protein mL58 (mrpl20) from Schizosaccharomyces pombe (strain 972 / ATCC 24843) (Fission yeast).